The following is a 261-amino-acid chain: Basic leucine zipper 19 (261 aa).

Disordered regions lie at residues 1-22 (MEDG…MGEL) and 74-100 (ESDE…LGNR). Polar residues predominate over residues 8–18 (FSNQEVFSSSE). Over residues 88–100 (CGKKGEKRPLGNR) the composition is skewed to basic and acidic residues. The 67-residue stretch at 89-155 (GKKGEKRPLG…SRLKCLLVDL (67 aa)) folds into the bZIP domain. The segment at 90–113 (KKGEKRPLGNREAVRKYREKKKAK) is basic motif. A leucine-zipper region spans residues 117-131 (LEDEVARLRAVNQQL). Positions 237–248 (NGSFSNVNTSVS) are enriched in low complexity. The disordered stretch occupies residues 237–261 (NGSFSNVNTSVSNKRKGGHRASRAV). Residues 249-261 (NKRKGGHRASRAV) show a composition bias toward basic residues.

Its subcellular location is the nucleus. In terms of biological role, transcription factor involved in the response to zinc ion deficiency. Binds to the consensus sequence 5'-[AG]TGTCGACA[CT]-3' also called zinc deficiency response element (ZDRE). The ZDRE sequence is conserved in the plant kingdom and present in the promoters of genes that constitute the primary response to zinc deficiency, comprising additional ZIP metal transporter genes. Required for zinc accumulation in roots. Mediates the expression of the zinc transporters ZIP3, ZIP4, ZIP5 and ZIP9 during growth in zinc-deficient conditions. ZIP9 transporter is involved in zinc uptake in roots. The polypeptide is Basic leucine zipper 19 (Arabidopsis thaliana (Mouse-ear cress)).